A 379-amino-acid polypeptide reads, in one-letter code: Salicylate/benzoate carboxyl methyltransferase (379 aa).

Tyrosine 40 provides a ligand contact to S-adenosyl-L-homocysteine. Glutamine 47 lines the salicylate pocket. Cysteine 82, asparagine 87, aspartate 119, leucine 120, serine 155, and phenylalanine 156 together coordinate S-adenosyl-L-homocysteine. Residues histidine 176 and tryptophan 177 each coordinate salicylate. Residues asparagine 188, aspartate 275, phenylalanine 277, and asparagine 278 each contribute to the Mg(2+) site.

Belongs to the methyltransferase superfamily. Type-7 methyltransferase family. SABATH subfamily. Homodimer. It depends on Mg(2+) as a cofactor. As to expression, expressed in flowers and at lower levels in leaves and stems. Hardly detected in roots and siliques. Expressed in the sepals and the leaf trichomes and hydathodes.

The enzyme catalyses benzoate + S-adenosyl-L-methionine = methyl benzoate + S-adenosyl-L-homocysteine. It carries out the reaction salicylate + S-adenosyl-L-methionine = methyl salicylate + S-adenosyl-L-homocysteine. Its function is as follows. Methyltransferase involved in the biosynthesis of methylsalicylate in response to stresses. Utilizes salicylic acid (SA) more efficiently than benzoic acid (BA). Can also use anthranilic acid and m-hydroxybenzoic acid as substrate. This chain is Salicylate/benzoate carboxyl methyltransferase (BSMT1), found in Arabidopsis thaliana (Mouse-ear cress).